Consider the following 102-residue polypeptide: Small ribosomal subunit protein uS10 (102 aa).

It belongs to the universal ribosomal protein uS10 family. Part of the 30S ribosomal subunit.

Involved in the binding of tRNA to the ribosomes. The polypeptide is Small ribosomal subunit protein uS10 (Symbiobacterium thermophilum (strain DSM 24528 / JCM 14929 / IAM 14863 / T)).